Reading from the N-terminus, the 571-residue chain is Proline--tRNA ligase (571 aa).

The protein belongs to the class-II aminoacyl-tRNA synthetase family. ProS type 1 subfamily. Homodimer.

Its subcellular location is the cytoplasm. It carries out the reaction tRNA(Pro) + L-proline + ATP = L-prolyl-tRNA(Pro) + AMP + diphosphate. Catalyzes the attachment of proline to tRNA(Pro) in a two-step reaction: proline is first activated by ATP to form Pro-AMP and then transferred to the acceptor end of tRNA(Pro). As ProRS can inadvertently accommodate and process non-cognate amino acids such as alanine and cysteine, to avoid such errors it has two additional distinct editing activities against alanine. One activity is designated as 'pretransfer' editing and involves the tRNA(Pro)-independent hydrolysis of activated Ala-AMP. The other activity is designated 'posttransfer' editing and involves deacylation of mischarged Ala-tRNA(Pro). The misacylated Cys-tRNA(Pro) is not edited by ProRS. The sequence is that of Proline--tRNA ligase from Actinobacillus pleuropneumoniae serotype 7 (strain AP76).